Consider the following 1045-residue polypeptide: E3 ubiquitin-protein ligase Topors (1045 aa).

The segment at 1 to 35 (MGSQPPLGSPLSREEGEAPPPAPASEGRRRSRRVR) is disordered. The tract at residues 1 to 195 (MGSQPPLGSP…RERNASVYSP (195 aa)) is E3 ubiquitin-protein ligase activity. The segment at 51 to 374 (ELAASAPARP…MAAFDQHANY (324 aa)) is required for DNA-binding. Residues Lys73, Lys76, Lys83, and Lys88 each participate in a glycyl lysine isopeptide (Lys-Gly) (interchain with G-Cter in SUMO2) cross-link. At Ser98 the chain carries Phosphoserine. The RING-type zinc-finger motif lies at 103 to 142 (CPICLDRFDNVSYLDRCLHKFCFRCVQEWSKNKAECPLCK). Residue Lys159 forms a Glycyl lysine isopeptide (Lys-Gly) (interchain with G-Cter in SUMO2) linkage. At Ser194 the chain carries Phosphoserine. A Glycyl lysine isopeptide (Lys-Gly) (interchain with G-Cter in SUMO2) cross-link involves residue Lys249. Residues 437–574 (SLLNTSDSSD…STSLSSPRNL (138 aa)) are required for sumoylation and localization to discrete nuclear foci. The segment at 437 to 654 (SLLNTSDSSD…RSRTRDSSWS (218 aa)) is interaction with SUMO1. Residues 442-475 (SDSSDEELVTGGATSQIQGVQTNDDLNNDSDDSS) are disordered. Polar residues predominate over residues 453-463 (GATSQIQGVQT). Residues 456–731 (SQIQGVQTND…RRTLSRAHYS (276 aa)) form an interaction with p53/TP53 region. The interval 456–882 (SQIQGVQTND…GKATDTTKHH (427 aa)) is interaction with TOP1. Ser499 bears the Phosphoserine mark. The disordered stretch occupies residues 511–692 (ETVKTQEQEQ…RSRNRDRYYL (182 aa)). Residues 521-534 (SYSSGDSDVSRCSS) show a composition bias toward low complexity. A compositionally biased stretch (basic and acidic residues) spans 539–565 (LGKDEQINKGHCDSSTRIKSKKEEKRS). A Glycyl lysine isopeptide (Lys-Gly) (interchain with G-Cter in SUMO) cross-link involves residue Lys560. The segment covering 566–578 (TSLSSPRNLNSSV) has biased composition (polar residues). Ser585 bears the Phosphoserine mark. 3 stretches are compositionally biased toward basic residues: residues 588-597 (NHRHRKRGRS), 613-630 (KNHRKHHGKKRMKSKRSR), and 637-647 (PRGRRDKKRSR). The segment covering 654-669 (SRRSQTLSLSSESTSR) has biased composition (low complexity). Lys701 participates in a covalent cross-link: Glycyl lysine isopeptide (Lys-Gly) (interchain with G-Cter in SUMO2). A disordered region spans residues 713 to 936 (RDGYESSYRR…DNSGPQDPLQ (224 aa)). Ser718 carries the post-translational modification Phosphoserine; by PLK1. The segment covering 721–730 (RRRTLSRAHY) has biased composition (basic residues). Positions 731-747 (SRQSSSPEFRVQSFSER) are enriched in polar residues. At Ser734 the chain carries Phosphoserine. Basic and acidic residues-rich tracts occupy residues 755 to 766 (NHSERKYYYYER) and 816 to 825 (FASKAKDSHY). Glycyl lysine isopeptide (Lys-Gly) (interchain with G-Cter in SUMO2) cross-links involve residues Lys819 and Lys837. Residues 854–863 (KHKRRKRKTR) show a composition bias toward basic residues. An interaction with UBE2I region spans residues 854–917 (KHKRRKRKTR…ITIDSDSDKD (64 aa)). Phosphoserine occurs at positions 864 and 866. Basic residues predominate over residues 880 to 897 (KHHKKKKKKHKKKHKKHH). A phosphoserine mark is found at Ser912, Ser914, and Ser1028. Residues 913–923 (DSDKDSEVKED) are compositionally biased toward basic and acidic residues.

Interacts with PARK7/DJ-1. Interacts with TOP1. Interacts with p53/TP53; can both ubiquitinate and sumoylate p53/TP53. Interacts with the SUMO1 conjugating enzyme UBE2I. Interacts with SUMO1. Interacts with NKX3-1; polyubiquitinates NKX3-1 and induces its proteasomal degradation. Interacts with SIN3A; sumoylates SIN3A. Interacts with IKBKE; induced by DNA damage. Post-translationally, phosphorylation at Ser-98 regulates the E3 ubiquitin-protein ligase activity but not the SUMO1-protein ligase activity. Phosphorylation at Ser-718 increases the E3 ubiquitin-protein ligase activity versus the SUMO1-protein ligase activity resulting in increased p53/TP53 ubiquitination and degradation. In terms of processing, sumoylated. Expressed at highest levels in testis and at lower levels in adrenal gland, bone marrow, brain, colon, heart, kidney, liver, muscle, ovary, pancreas, placenta, prostate, skeletal muscle, skin, small intestine, spleen, stomach, testis, thymus, thyroid and uterus. Expressed in the alveolar epithelium of the lung. Expression is commonly decreased in colon adenocarcinomas and lung cancers.

It is found in the nucleus. The protein resides in the PML body. It catalyses the reaction S-ubiquitinyl-[E2 ubiquitin-conjugating enzyme]-L-cysteine + [acceptor protein]-L-lysine = [E2 ubiquitin-conjugating enzyme]-L-cysteine + N(6)-ubiquitinyl-[acceptor protein]-L-lysine.. Functionally, functions as an E3 ubiquitin-protein ligase and as an E3 SUMO1-protein ligase. Probable tumor suppressor involved in cell growth, cell proliferation and apoptosis that regulates p53/TP53 stability through ubiquitin-dependent degradation. May regulate chromatin modification through sumoylation of several chromatin modification-associated proteins. May be involved in DNA damage-induced cell death through IKBKE sumoylation. This is E3 ubiquitin-protein ligase Topors (TOPORS) from Homo sapiens (Human).